We begin with the raw amino-acid sequence, 156 residues long: Arginine repressor (156 aa).

Belongs to the ArgR family.

Its subcellular location is the cytoplasm. The protein operates within amino-acid biosynthesis; L-arginine biosynthesis [regulation]. In terms of biological role, regulates arginine biosynthesis genes. The sequence is that of Arginine repressor from Shewanella sediminis (strain HAW-EB3).